The chain runs to 928 residues: MLLYRGAPAGPGTPGGGLARAGSVPQAFRIRLSTMSPRYLQSNSSSHTRPFSAIAELLDNAVDPDVSARTVFIDVEEVKKKPCLTFTDDGCGMTPHKLHRMLSFGFTDKVIKKSQRPIGVFGNGFKSGSMRLGKDALVFTKNGNTLAVGLLSQTYLECIQAQAVIVPIVPFSQQNKKMIVTEDSLPSLEAILNYSIFNCEKDLLSQFDAIPGKKGTRVLIWNIRRNKDGKSELDFDTDQYDILVSDFDAEEKEIGGVTSELPETEYSLRAFCSILYMKPRMKIFLRQKKVTTQMIAKSLANVEYDIYKPTSTNKQVRITFGFSCKYHNQFGVMMYHNNRLIKAFEKAGCQLKPTCGEGVGVIGVIECNFLKPAYNKQDFEYTKEYRLTINALARKLNAYWKEKISQENFEPLPTSRRIPDQTWVQCDECLKWRRLPGMVDPSTLPARWFCYYNPHPKFKRCSVPEEQERIDEDLHRSKAKQQVEAAEKKQKPMESDKYQVFSNPPKTPPLQDMAELNDKTIGYEQINSPSLLPSVREESRSPPRLKSLDSSAFQISRKYKLILGEEPVEKRRKIQTEMPLSPIDYSMSGFYRRVEAATAYPEGENSPDKCSSERSTPPHLIPEYPESNKHTEENREAPALCPGSQDQDQGFLLPEELEDQMPKLVAEESNRSSENIDKDMNKGPFVAVVGVAKGVADSGAPIQLVPFNREEFVGKRKRAESWKRANPYSSAAPAATAGKGKDCQDSRSRNMPKIKTPKESEELKRTTEKLERVLAERNLFQQKVEELEQEKNHWHSEYKKAQHELVTYSTQETEGIYWSKKHMGYRQAEFQILKAELERTKEEKQELKEKLKETESHLEVLQKAQVSFRNPEGDDLERALARLTRLRVHVSYLLTSVLPHLELREIGYDSEQVDGILYTVLEANHILD.

The CW-type zinc-finger motif lies at 417-469; that stretch reads RIPDQTWVQCDECLKWRRLPGMVDPSTLPARWFCYYNPHPKFKRCSVPEEQER. The Zn(2+) site is built by cysteine 426, cysteine 429, cysteine 450, and cysteine 461. 4 disordered regions span residues 474 to 510, 527 to 546, 599 to 649, and 718 to 766; these read LHRSKAKQQVEAAEKKQKPMESDKYQVFSNPPKTPPL, NSPSLLPSVREESRSPPRLK, AYPE…DQDQ, and RAES…LKRT. The span at 485-497 shows a compositional bias: basic and acidic residues; sequence AAEKKQKPMESDK. Basic and acidic residues-rich tracts occupy residues 626 to 636, 739 to 748, and 756 to 766; these read ESNKHTEENRE, KGKDCQDSRS, and TPKESEELKRT. Positions 758–867 form a coiled coil; that stretch reads KESEELKRTT…LEVLQKAQVS (110 aa).

It is found in the nucleus. Its function is as follows. Histone methylation reader which binds to non-methylated (H3K4me0), monomethylated (H3K4me1), dimethylated (H3K4me2) and trimethylated (H3K4me3) 'Lys-4' on histone H3. The order of binding preference is H3K4me3 &gt; H3K4me2 &gt; H3K4me1 &gt; H3K4me0. The polypeptide is MORC family CW-type zinc finger protein 4 (Morc4) (Mus musculus (Mouse)).